Consider the following 704-residue polypeptide: Serotransferrin (704 aa).

An N-terminal signal peptide occupies residues 1–19 (MRPAVRALLACAVLGLCLA). 2 consecutive Transferrin-like domains span residues 25–351 (VRWC…NLRE) and 364–689 (VKWC…NLRQ). Disulfide bonds link C28–C66 and C38–C57. Residue R42 is modified to Dimethylated arginine. Fe(3+) is bound by residues D81 and Y113. 5 cysteine pairs are disulfide-bonded: C136–C217, C176–C192, C179–C200, C189–C202, and C250–C264. Residues T138, R142, A144, and G145 each contribute to the hydrogencarbonate site. Y211 contributes to the Fe(3+) binding site. H272 is a Fe(3+) binding site. Cystine bridges form between C362/C622, C367/C399, C377/C390, C424/C699, C441/C663, C473/C549, C497/C690, C507/C521, C518/C532, C589/C603, and C641/C646. The Fe(3+) site is built by D414 and Y449. Residues T475, R479, A481, and G482 each contribute to the hydrogencarbonate site. N-linked (GlcNAc...) asparagine glycosylation is present at N514. Y543 serves as a coordination point for Fe(3+). H611 contacts Fe(3+). S691 bears the Phosphoserine mark.

Belongs to the transferrin family. In terms of assembly, monomer. Part of a complex composed of SLC40A1/ferroportin, TF/transferrin and HEPH/hephaestin that transfers iron from cells to transferrin. Expressed by the liver and secreted in plasma.

It localises to the secreted. Transferrins are iron binding transport proteins which can bind two Fe(3+) ions in association with the binding of an anion, usually bicarbonate. It is responsible for the transport of iron from sites of absorption and heme degradation to those of storage and utilization. Serum transferrin may also have a further role in stimulating cell proliferation. The sequence is that of Serotransferrin (TF) from Bos taurus (Bovine).